A 349-amino-acid polypeptide reads, in one-letter code: DNA polymerase IV (349 aa).

The 182-residue stretch at 7 to 188 (IIHIDMDYFF…LPVKKLFGVG (182 aa)) folds into the UmuC domain. 2 residues coordinate Mg(2+): D11 and D106. E107 is a catalytic residue.

The protein belongs to the DNA polymerase type-Y family. Monomer. Mg(2+) is required as a cofactor.

The protein localises to the cytoplasm. The enzyme catalyses DNA(n) + a 2'-deoxyribonucleoside 5'-triphosphate = DNA(n+1) + diphosphate. Poorly processive, error-prone DNA polymerase involved in untargeted mutagenesis. Copies undamaged DNA at stalled replication forks, which arise in vivo from mismatched or misaligned primer ends. These misaligned primers can be extended by PolIV. Exhibits no 3'-5' exonuclease (proofreading) activity. May be involved in translesional synthesis, in conjunction with the beta clamp from PolIII. The sequence is that of DNA polymerase IV from Francisella tularensis subsp. holarctica (strain OSU18).